Here is a 662-residue protein sequence, read N- to C-terminus: tRNA 5-methylaminomethyl-2-thiouridine biosynthesis bifunctional protein MnmC (662 aa).

The tract at residues 1-245 is tRNA (mnm(5)s(2)U34)-methyltransferase; sequence MKQNAIQPAN…KREMLTGEMA (245 aa). The segment at 270–662 is FAD-dependent cmnm(5)s(2)U34 oxidoreductase; sequence IGGGIASALL…RKLLKGKAVK (393 aa).

This sequence in the N-terminal section; belongs to the methyltransferase superfamily. tRNA (mnm(5)s(2)U34)-methyltransferase family. The protein in the C-terminal section; belongs to the DAO family. FAD serves as cofactor.

The protein localises to the cytoplasm. It carries out the reaction 5-aminomethyl-2-thiouridine(34) in tRNA + S-adenosyl-L-methionine = 5-methylaminomethyl-2-thiouridine(34) in tRNA + S-adenosyl-L-homocysteine + H(+). Its function is as follows. Catalyzes the last two steps in the biosynthesis of 5-methylaminomethyl-2-thiouridine (mnm(5)s(2)U) at the wobble position (U34) in tRNA. Catalyzes the FAD-dependent demodification of cmnm(5)s(2)U34 to nm(5)s(2)U34, followed by the transfer of a methyl group from S-adenosyl-L-methionine to nm(5)s(2)U34, to form mnm(5)s(2)U34. The protein is tRNA 5-methylaminomethyl-2-thiouridine biosynthesis bifunctional protein MnmC of Klebsiella pneumoniae subsp. pneumoniae (strain ATCC 700721 / MGH 78578).